Reading from the N-terminus, the 66-residue chain is Opicalcin-2 (66 aa).

An N-terminal signal peptide occupies residues 1–22 (MKPSLIIVTFIVVFMTISCVAA). Positions 23–31 (DDEQETWIE) are excised as a propeptide. Disulfide bonds link cysteine 36–cysteine 50, cysteine 43–cysteine 54, and cysteine 49–cysteine 65. Residues 55–57 (KRR) are essential for stimulation of [3H]ryanodine binding to RYR1.

It belongs to the scorpion calcin family. In terms of tissue distribution, expressed by the venom gland.

It is found in the secreted. Functionally, this toxin stabilizes ryanodine receptor 1 (RyR1) opening in a long-lasting subconductance state (40% of the full conductance state). Furthermore, it triggers calcium release from sarcoplasmic vesicles (64.2 nM are enough to induce a sharp release, and 50% of the total calcium is released after toxin (100 nM) addition) probably by acting as a cell-penetrating peptide (CPP). In addition, it has been shown to dose-dependently stimulate ryanodine binding to RyR1 (EC(50)=3.2 nM). It also augments the bell-shaped calcium-[3H]ryanodine binding curve that is maximal at about 10 uM calcium concentration. It binds a different site as ryanodine. It acts synergistically with caffeine. In vivo, intracerebroventricular injection into mice induces neurotoxic symptoms, followed by death. The chain is Opicalcin-2 from Opistophthalmus carinatus (African yellow leg scorpion).